A 313-amino-acid chain; its full sequence is Ornithine carbamoyltransferase (313 aa).

Carbamoyl phosphate-binding positions include 61 to 64, Gln-88, Arg-112, and 139 to 142; these read STRT and HPCQ. Residues Asn-170, Asp-228, and 232–233 contribute to the L-ornithine site; that span reads SM. Residues 268-269 and Arg-296 contribute to the carbamoyl phosphate site; that span reads CL.

It belongs to the aspartate/ornithine carbamoyltransferase superfamily. OTCase family.

The protein resides in the cytoplasm. It catalyses the reaction carbamoyl phosphate + L-ornithine = L-citrulline + phosphate + H(+). The protein operates within amino-acid biosynthesis; L-arginine biosynthesis; L-arginine from L-ornithine and carbamoyl phosphate: step 1/3. Its function is as follows. Reversibly catalyzes the transfer of the carbamoyl group from carbamoyl phosphate (CP) to the N(epsilon) atom of ornithine (ORN) to produce L-citrulline. The sequence is that of Ornithine carbamoyltransferase from Bordetella parapertussis (strain 12822 / ATCC BAA-587 / NCTC 13253).